The sequence spans 134 residues: Profilin-1 (134 aa).

Residues Cys-13 and Cys-118 are joined by a disulfide bond. The short motif at 84 to 100 is the Involved in PIP2 interaction element; sequence AVIRGKKGSGGITIKKT. The residue at position 114 (Thr-114) is a Phosphothreonine.

It belongs to the profilin family. Occurs in many kinds of cells as a complex with monomeric actin in a 1:1 ratio. Post-translationally, phosphorylated by MAP kinases.

It is found in the cytoplasm. The protein resides in the cytoskeleton. In terms of biological role, binds to actin and affects the structure of the cytoskeleton. At high concentrations, profilin prevents the polymerization of actin, whereas it enhances it at low concentrations. This chain is Profilin-1, found in Olea europaea (Common olive).